The following is a 362-amino-acid chain: B3 domain-containing protein IDEF1 (362 aa).

The interval V30 to A91 is disordered. A compositionally biased stretch (basic residues) spans P48–N70. A DNA-binding region (TF-B3) is located at residues L253 to I355.

Polyubiquitinated. Ubiquitination leads to its subsequent degradation via the proteasome pathway. Expressed in roots.

It localises to the nucleus. In terms of biological role, transcription regulator involved in iron deficiency response and tolerance. May regulate directly iron transporters or other transcription factors involved in iron-deficiency response. Binds specifically to the DNA sequence 5'-CATGC-3' of the IDE1 element found in the promoter of the barley iron deficiency-inducible gene IDS2. The protein is B3 domain-containing protein IDEF1 (IDEF1) of Oryza sativa subsp. japonica (Rice).